The sequence spans 68 residues: Large ribosomal subunit protein bL31 (68 aa).

4 residues coordinate Zn(2+): cysteine 17, cysteine 19, cysteine 37, and cysteine 40.

It belongs to the bacterial ribosomal protein bL31 family. Type A subfamily. In terms of assembly, part of the 50S ribosomal subunit. It depends on Zn(2+) as a cofactor.

Binds the 23S rRNA. The chain is Large ribosomal subunit protein bL31 from Clostridium perfringens (strain ATCC 13124 / DSM 756 / JCM 1290 / NCIMB 6125 / NCTC 8237 / Type A).